We begin with the raw amino-acid sequence, 349 residues long: Flavonol synthase/flavanone 3-hydroxylase (349 aa).

The Fe2OG dioxygenase domain occupies 213-310 (DIVYMLKINY…RMSWPVFLEP (98 aa)). Fe cation contacts are provided by His-238, Asp-240, and His-291.

This sequence belongs to the iron/ascorbate-dependent oxidoreductase family. Fe cation serves as cofactor. Requires L-ascorbate as cofactor.

The protein resides in the cytoplasm. The catalysed reaction is a (2R,3R)-dihydroflavonol + 2-oxoglutarate + O2 = a flavonol + succinate + CO2 + H2O. The enzyme catalyses a (2S)-flavan-4-one + 2-oxoglutarate + O2 = a (2R,3R)-dihydroflavonol + succinate + CO2. It participates in secondary metabolite biosynthesis; flavonoid biosynthesis. In terms of biological role, catalyzes the formation of flavonols from dihydroflavonols. It can act on dihydrokaempferol to produce kaempferol, on dihydroquercetin to produce quercitin and on dihydromyricetin to produce myricetin. The protein is Flavonol synthase/flavanone 3-hydroxylase of Solanum tuberosum (Potato).